Consider the following 174-residue polypeptide: FMN reductase (NADH) RutF (174 aa).

Belongs to the non-flavoprotein flavin reductase family. RutF subfamily.

The enzyme catalyses FMNH2 + NAD(+) = FMN + NADH + 2 H(+). In terms of biological role, catalyzes the reduction of FMN to FMNH2 which is used to reduce pyrimidine by RutA via the Rut pathway. This chain is FMN reductase (NADH) RutF, found in Agrobacterium fabrum (strain C58 / ATCC 33970) (Agrobacterium tumefaciens (strain C58)).